Reading from the N-terminus, the 158-residue chain is NAD(P)H-quinone oxidoreductase subunit J, chloroplastic (158 aa).

This sequence belongs to the complex I 30 kDa subunit family. NDH is composed of at least 16 different subunits, 5 of which are encoded in the nucleus.

It is found in the plastid. The protein resides in the chloroplast thylakoid membrane. It catalyses the reaction a plastoquinone + NADH + (n+1) H(+)(in) = a plastoquinol + NAD(+) + n H(+)(out). The enzyme catalyses a plastoquinone + NADPH + (n+1) H(+)(in) = a plastoquinol + NADP(+) + n H(+)(out). In terms of biological role, NDH shuttles electrons from NAD(P)H:plastoquinone, via FMN and iron-sulfur (Fe-S) centers, to quinones in the photosynthetic chain and possibly in a chloroplast respiratory chain. The immediate electron acceptor for the enzyme in this species is believed to be plastoquinone. Couples the redox reaction to proton translocation, and thus conserves the redox energy in a proton gradient. In Nicotiana tabacum (Common tobacco), this protein is NAD(P)H-quinone oxidoreductase subunit J, chloroplastic.